Consider the following 638-residue polypeptide: Sodium- and chloride-dependent neutral and basic amino acid transporter B(0+) (638 aa).

Residues 1–44 (MDRLKCPNFFKCRQKEKVTASSENFHVGENDENQERGNWSKKSD) are Cytoplasmic-facing. The next 3 helical transmembrane spans lie at 45-65 (YLLSMVGYAVGLGNVWRFPYL), 72-92 (GAFLIPYAIMLALAGLPLFFL), and 110-130 (ILPLFQGVGITMVLISVFVAI). Residues 131-230 (YYNVIIAYSL…RSSGMDETGV (100 aa)) are Extracellular-facing. N-linked (GlcNAc...) asparagine glycans are attached at residues Asn-155, Asn-163, Asn-174, Asn-185, Asn-193, and Asn-198. 2 helical membrane passes run 231-251 (VVWYLALCLLLAWLIVGAALF) and 257-277 (SGKVVYFTALFPYVVLLILLI). N-linked (GlcNAc...) asparagine glycosylation occurs at Asn-298. A run of 7 helical transmembrane segments spans residues 311-331 (AATQIFYSLSVAWGGLVALSS), 344-364 (IIVCLTNCLTSVFAGFAIFSI), 395-415 (LAQLPAGPFWSILFFFMLLTL), 453-473 (ILFLLGLLCVTQAGIYWVHLI), 476-496 (FCAGWGILIAAILEIAGIIWI), 524-544 (CWFVITPILLSAILVWSLVKF), and 559-579 (VALGWCMIIFCIIWIPIMAII). At 580–638 (KIVQAEGNILQRIISCCRPASNWGPYLEKHRGERYRDMAEPAKETDHEIPTISGSTKPE) the chain is on the cytoplasmic side. Residues 618-628 (AEPAKETDHEI) are compositionally biased toward basic and acidic residues. The tract at residues 618–638 (AEPAKETDHEIPTISGSTKPE) is disordered.

It belongs to the sodium:neurotransmitter symporter (SNF) (TC 2.A.22) family. SLC6A14 subfamily. As to expression, expressed in the distal region of the intestinal tract: cecum and colon.

It is found in the membrane. The protein resides in the apical cell membrane. The catalysed reaction is glycine(out) + chloride(out) + 2 Na(+)(out) = glycine(in) + chloride(in) + 2 Na(+)(in). It carries out the reaction L-leucine(out) + chloride(out) + 2 Na(+)(out) = L-leucine(in) + chloride(in) + 2 Na(+)(in). The enzyme catalyses L-glutamine(out) + chloride(out) + 2 Na(+)(out) = L-glutamine(in) + chloride(in) + 2 Na(+)(in). It catalyses the reaction L-arginine(out) + chloride(out) + 2 Na(+)(out) = L-arginine(in) + chloride(in) + 2 Na(+)(in). The catalysed reaction is (R)-carnitine(out) + chloride(out) + 2 Na(+)(out) = (R)-carnitine(in) + chloride(in) + 2 Na(+)(in). It carries out the reaction O-propanoyl-(R)-carnitine(out) + chloride(out) + 2 Na(+)(out) = O-propanoyl-(R)-carnitine(in) + chloride(in) + 2 Na(+)(in). The enzyme catalyses L-isoleucine(out) + chloride(out) + 2 Na(+)(out) = L-isoleucine(in) + chloride(in) + 2 Na(+)(in). It catalyses the reaction L-methionine(out) + chloride(out) + 2 Na(+)(out) = L-methionine(in) + chloride(in) + 2 Na(+)(in). The catalysed reaction is L-valine(out) + chloride(out) + 2 Na(+)(out) = L-valine(in) + chloride(in) + 2 Na(+)(in). It carries out the reaction L-alanine(out) + chloride(out) + 2 Na(+)(out) = L-alanine(in) + chloride(in) + 2 Na(+)(in). The enzyme catalyses L-serine(out) + chloride(out) + 2 Na(+)(out) = L-serine(in) + chloride(in) + 2 Na(+)(in). It catalyses the reaction L-cysteine(out) + chloride(out) + 2 Na(+)(out) = L-cysteine(in) + chloride(in) + 2 Na(+)(in). The catalysed reaction is L-asparagine(out) + chloride(out) + 2 Na(+)(out) = L-asparagine(in) + chloride(in) + 2 Na(+)(in). It carries out the reaction L-threonine(out) + chloride(out) + 2 Na(+)(out) = L-threonine(in) + chloride(in) + 2 Na(+)(in). The enzyme catalyses L-phenylalanine(out) + chloride(out) + 2 Na(+)(out) = L-phenylalanine(in) + chloride(in) + 2 Na(+)(in). It catalyses the reaction L-tryptophan(out) + chloride(out) + 2 Na(+)(out) = L-tryptophan(in) + chloride(in) + 2 Na(+)(in). The catalysed reaction is L-tyrosine(out) + chloride(out) + 2 Na(+)(out) = L-tyrosine(in) + chloride(in) + 2 Na(+)(in). It carries out the reaction L-histidine(out) + chloride(out) + 2 Na(+)(out) = L-histidine(in) + chloride(in) + 2 Na(+)(in). The enzyme catalyses L-lysine(out) + chloride(out) + 2 Na(+)(out) = L-lysine(in) + chloride(in) + 2 Na(+)(in). It catalyses the reaction O-butanoyl-(R)-carnitine(out) + chloride(out) + 2 Na(+)(out) = O-butanoyl-(R)-carnitine(in) + chloride(in) + 2 Na(+)(in). Its function is as follows. Amino acid transporter that plays an important role in the absorption of amino acids in the intestinal tract. Mediates the uptake of a broad range of neutral and cationic amino acids (with the exception of proline) in a Na(+)/Cl(-)-dependent manner. Transports non-alpha-amino acids such as beta-alanine with low affinity, and has a higher affinity for dipolar and cationic amino acids such as leucine and lysine. Can also transport carnitine, butyrylcarnitine and propionylcarnitine coupled to the transmembrane gradients of Na(+) and Cl(-). In Mus musculus (Mouse), this protein is Sodium- and chloride-dependent neutral and basic amino acid transporter B(0+).